Consider the following 617-residue polypeptide: Dihydroxy-acid dehydratase (617 aa).

Residue Asp-81 coordinates Mg(2+). Position 122 (Cys-122) interacts with [2Fe-2S] cluster. Asp-123 and Lys-124 together coordinate Mg(2+). Lys-124 carries the N6-carboxylysine modification. [2Fe-2S] cluster is bound at residue Cys-195. Residue Glu-491 coordinates Mg(2+). Ser-517 (proton acceptor) is an active-site residue.

It belongs to the IlvD/Edd family. In terms of assembly, homodimer. It depends on [2Fe-2S] cluster as a cofactor. Requires Mg(2+) as cofactor.

It carries out the reaction (2R)-2,3-dihydroxy-3-methylbutanoate = 3-methyl-2-oxobutanoate + H2O. The catalysed reaction is (2R,3R)-2,3-dihydroxy-3-methylpentanoate = (S)-3-methyl-2-oxopentanoate + H2O. The protein operates within amino-acid biosynthesis; L-isoleucine biosynthesis; L-isoleucine from 2-oxobutanoate: step 3/4. It functions in the pathway amino-acid biosynthesis; L-valine biosynthesis; L-valine from pyruvate: step 3/4. Functions in the biosynthesis of branched-chain amino acids. Catalyzes the dehydration of (2R,3R)-2,3-dihydroxy-3-methylpentanoate (2,3-dihydroxy-3-methylvalerate) into 2-oxo-3-methylpentanoate (2-oxo-3-methylvalerate) and of (2R)-2,3-dihydroxy-3-methylbutanoate (2,3-dihydroxyisovalerate) into 2-oxo-3-methylbutanoate (2-oxoisovalerate), the penultimate precursor to L-isoleucine and L-valine, respectively. The chain is Dihydroxy-acid dehydratase from Caulobacter vibrioides (strain ATCC 19089 / CIP 103742 / CB 15) (Caulobacter crescentus).